Consider the following 546-residue polypeptide: E3 ubiquitin-protein ligase NEURL1B (546 aa).

Residues 38-194 (APRFHAQAKG…ITDEVQLLES (157 aa)) enclose the NHR 1 domain. Position 199 is a phosphothreonine (Thr199). The 155-residue stretch at 270–424 (ELRFHATRGP…GVAGQLRLLG (155 aa)) folds into the NHR 2 domain. The tract at residues 429-490 (SSETMTPSGS…FSAPEPTGSR (62 aa)) is disordered. Over residues 457-471 (SSSASESSLVTAPSS) the composition is skewed to low complexity. The RING-type zinc-finger motif lies at 494 to 534 (CTVCFDSEVDTVIYTCGHMCLCHGCGLRLRRQARACCPICR).

In terms of assembly, interacts with DLL1 and DLL4. In terms of tissue distribution, expressed in the limb buds and dorsal root ganglia. Expressed in brain and kidney and at low levels in the heart.

The protein resides in the cytoplasm. The catalysed reaction is S-ubiquitinyl-[E2 ubiquitin-conjugating enzyme]-L-cysteine + [acceptor protein]-L-lysine = [E2 ubiquitin-conjugating enzyme]-L-cysteine + N(6)-ubiquitinyl-[acceptor protein]-L-lysine.. The protein operates within protein modification; protein ubiquitination. Its function is as follows. E3 ubiquitin-protein ligase involved in regulation of the Notch pathway through influencing the stability and activity of several Notch ligands. This chain is E3 ubiquitin-protein ligase NEURL1B (Neurl1b), found in Mus musculus (Mouse).